Reading from the N-terminus, the 315-residue chain is DNA-directed RNA polymerase subunit alpha (315 aa).

Positions 1–228 (MLEIEKPIIE…EHFKLFMSLT (228 aa)) are alpha N-terminal domain (alpha-NTD). The segment at 245-315 (KEKVLEMTVE…LGLCLKLNDE (71 aa)) is alpha C-terminal domain (alpha-CTD).

Belongs to the RNA polymerase alpha chain family. Homodimer. The RNAP catalytic core consists of 2 alpha, 1 beta, 1 beta' and 1 omega subunit. When a sigma factor is associated with the core the holoenzyme is formed, which can initiate transcription.

The catalysed reaction is RNA(n) + a ribonucleoside 5'-triphosphate = RNA(n+1) + diphosphate. In terms of biological role, DNA-dependent RNA polymerase catalyzes the transcription of DNA into RNA using the four ribonucleoside triphosphates as substrates. In Clostridium botulinum (strain Alaska E43 / Type E3), this protein is DNA-directed RNA polymerase subunit alpha.